We begin with the raw amino-acid sequence, 90 residues long: Small ribosomal subunit protein uS15c (90 aa).

This sequence belongs to the universal ribosomal protein uS15 family. As to quaternary structure, part of the 30S ribosomal subunit.

Its subcellular location is the plastid. The protein resides in the chloroplast. The polypeptide is Small ribosomal subunit protein uS15c (rps15) (Buxus microphylla (Littleleaf boxwood)).